The sequence spans 199 residues: uncharacterized protein (199 aa).

The signal sequence occupies residues 1–23 (MSARAPKELRLALPPCLLNRTFA). N-linked (GlcNAc...) asparagine glycans are attached at residues Asn19 and Asn26. Residues 24–60 (SHNASGGSSAGLRSSGAGGGTCITQVGQQLFQSFSST) are Extracellular-facing. The helical transmembrane segment at 61-81 (LVLIVLVTLIFCLLVLSLSTF) threads the bilayer. At 82–199 (HIHKRRMKKR…EGLLQTVVLS (118 aa)) the chain is on the cytoplasmic side. The interval 93-190 (MQRAQEEYER…ASSCLDTPGE (98 aa)) is disordered. Composition is skewed to basic and acidic residues over residues 95-106 (RAQEEYERDHCS) and 124-135 (HGKETRLERQPR). A compositionally biased stretch (low complexity) spans 147–163 (SSSSSSSSSPGLLCQGP). The segment covering 164-176 (CAPPPPLPAPTPQ) has biased composition (pro residues).

It is found in the membrane. This is an uncharacterized protein from Mus musculus (Mouse).